Here is a 24-residue protein sequence, read N- to C-terminus: Pyruvate kinase (24 aa).

This sequence belongs to the pyruvate kinase family. In terms of assembly, homotetramer. It depends on Mg(2+) as a cofactor. The cofactor is K(+).

It carries out the reaction pyruvate + ATP = phosphoenolpyruvate + ADP + H(+). Its pathway is carbohydrate degradation; glycolysis; pyruvate from D-glyceraldehyde 3-phosphate: step 5/5. This chain is Pyruvate kinase (pyk), found in Clostridium pasteurianum.